Consider the following 948-residue polypeptide: Isoleucine--tRNA ligase (948 aa).

The 'HIGH' region motif lies at proline 58–histidine 68. Position 566 (glutamate 566) interacts with L-isoleucyl-5'-AMP. The 'KMSKS' region motif lies at lysine 607 to serine 611. Lysine 610 contacts ATP. Positions 911, 914, 931, and 934 each coordinate Zn(2+).

Belongs to the class-I aminoacyl-tRNA synthetase family. IleS type 1 subfamily. Monomer. Zn(2+) serves as cofactor.

The protein resides in the cytoplasm. It catalyses the reaction tRNA(Ile) + L-isoleucine + ATP = L-isoleucyl-tRNA(Ile) + AMP + diphosphate. Catalyzes the attachment of isoleucine to tRNA(Ile). As IleRS can inadvertently accommodate and process structurally similar amino acids such as valine, to avoid such errors it has two additional distinct tRNA(Ile)-dependent editing activities. One activity is designated as 'pretransfer' editing and involves the hydrolysis of activated Val-AMP. The other activity is designated 'posttransfer' editing and involves deacylation of mischarged Val-tRNA(Ile). This chain is Isoleucine--tRNA ligase, found in Vibrio vulnificus (strain CMCP6).